We begin with the raw amino-acid sequence, 98 residues long: NADH-ubiquinone oxidoreductase chain 4L (98 aa).

Helical transmembrane passes span 2 to 22, 29 to 49, and 61 to 81; these read PPIF…TLIF, SLLC…LIIL, and ILLL…LVMV.

It belongs to the complex I subunit 4L family. As to quaternary structure, core subunit of respiratory chain NADH dehydrogenase (Complex I) which is composed of 45 different subunits.

Its subcellular location is the mitochondrion inner membrane. It catalyses the reaction a ubiquinone + NADH + 5 H(+)(in) = a ubiquinol + NAD(+) + 4 H(+)(out). Core subunit of the mitochondrial membrane respiratory chain NADH dehydrogenase (Complex I) which catalyzes electron transfer from NADH through the respiratory chain, using ubiquinone as an electron acceptor. Part of the enzyme membrane arm which is embedded in the lipid bilayer and involved in proton translocation. This chain is NADH-ubiquinone oxidoreductase chain 4L (MT-ND4L), found in Avahi occidentalis (Western woolly lemur).